A 290-amino-acid polypeptide reads, in one-letter code: Acetylglutamate kinase (290 aa).

Residues 72 to 73, Arg94, and Asn187 contribute to the substrate site; that span reads GG.

The protein belongs to the acetylglutamate kinase family. ArgB subfamily.

It is found in the plastid. The protein localises to the chloroplast. It carries out the reaction N-acetyl-L-glutamate + ATP = N-acetyl-L-glutamyl 5-phosphate + ADP. The protein operates within amino-acid biosynthesis; L-arginine biosynthesis; N(2)-acetyl-L-ornithine from L-glutamate: step 2/4. Its function is as follows. Catalyzes the ATP-dependent phosphorylation of N-acetyl-L-glutamate. The sequence is that of Acetylglutamate kinase from Cyanidioschyzon merolae (strain NIES-3377 / 10D) (Unicellular red alga).